Reading from the N-terminus, the 304-residue chain is Porphobilinogen deaminase (304 aa).

Position 239 is an S-(dipyrrolylmethanemethyl)cysteine (C239).

It belongs to the HMBS family. As to quaternary structure, monomer. The cofactor is dipyrromethane.

It catalyses the reaction 4 porphobilinogen + H2O = hydroxymethylbilane + 4 NH4(+). It participates in porphyrin-containing compound metabolism; protoporphyrin-IX biosynthesis; coproporphyrinogen-III from 5-aminolevulinate: step 2/4. Functionally, tetrapolymerization of the monopyrrole PBG into the hydroxymethylbilane pre-uroporphyrinogen in several discrete steps. The polypeptide is Porphobilinogen deaminase (Brucella ovis (strain ATCC 25840 / 63/290 / NCTC 10512)).